The sequence spans 217 residues: Phosphatidylinositol phosphate synthase (217 aa).

2 helical membrane passes run 28–49 and 55–74; these read LTPD…LTLF and FAGA…DGAM. 31–34 lines the a CDP-1,2-diacyl-sn-glycerol pocket; it reads DVVT. Positions 68 and 71 each coordinate Mg(2+). Residues Gly-72, Arg-76, and Thr-82 each coordinate a CDP-1,2-diacyl-sn-glycerol. Positions 89 and 93 each coordinate Mg(2+). The active-site Proton acceptor is the Asp-93. 4 helical membrane passes run 95–112, 118–136, 156–173, and 179–200; these read ISDG…AFHM, VIAT…YIKA, LIIV…FVPW, and VGMW…HTVW.

The protein belongs to the CDP-alcohol phosphatidyltransferase class-I family. In terms of assembly, homodimer. Requires Mg(2+) as cofactor.

The protein resides in the cell membrane. The enzyme catalyses a CDP-1,2-diacyl-sn-glycerol + 1D-myo-inositol 3-phosphate = a 1,2-diacyl-sn-glycero-3-phospho-(1D-myo-inositol-3-phosphate) + CMP + H(+). It catalyses the reaction 1,2-di-(9Z-octadecenoyl)-sn-glycero-3-cytidine-5'-diphosphate + 1D-myo-inositol 3-phosphate = 1,2-di-(9Z-octadecenoyl)-sn-glycero-3-phospho-(1D-myo-inositol-3-phosphate) + CMP + H(+). It participates in phospholipid metabolism; phosphatidylinositol phosphate biosynthesis. Competitively inhibited by several inositol 1-phosphate analogs, including the phosphonate analog 1-deoxy-1-phosphonomethyl-myo-inositol (Ino-C-P). Functionally, catalyzes the conjugation of the 1'-hydroxyl group of D-myo-inositol-3-phosphate (also named L-myo-inositol-1-phosphate) with a lipid tail of cytidine diphosphate diacylglycerol (CDP-DAG), forming phosphatidylinositol phosphate (PIP) and CMP. PIP is a precursor of phosphatidylinositol (PI) which is an essential lipid for mycobacteria required for formation of their cell wall. The sequence is that of Phosphatidylinositol phosphate synthase from Mycobacterium bovis (strain BCG / Pasteur 1173P2).